We begin with the raw amino-acid sequence, 67 residues long: Medusin-S1 (67 aa).

A signal peptide spans 1 to 22; it reads MSFLKKSLFLVLFLGFVSLSIC. A propeptide spanning residues 23-48 is cleaved from the precursor; it reads EEEKRETEEKENEQEDDREERSEEKR. A disordered region spans residues 26 to 47; the sequence is KRETEEKENEQEDDREERSEEK. Positions 31 to 40 are enriched in acidic residues; it reads EKENEQEDDR. Position 66 is a leucine amide (leucine 66).

It belongs to the frog skin active peptide (FSAP) family. Medusin subfamily. As to expression, expressed by the skin glands.

It is found in the secreted. Its subcellular location is the target cell membrane. Antibacterial peptide with moderate activity against the Gram-positive bacteria (S.aureus ATCC 25923, MIC=25 uM), but not against all other bacteria (both Gram-positive and Gram-negative) tested. Does not show activity against fungi, and against Leishmania species. It adopts an alpha-helical structure with very low amphipathicity in membrane environments. In Phyllomedusa sauvagei (Sauvage's leaf frog), this protein is Medusin-S1.